A 579-amino-acid polypeptide reads, in one-letter code: MVFRNVGRPPEEEDAEAAREPGPSELLCPRHRCALDPKALPPGLALERTWGPVAGLEAQLAALGLGQPAGPGIKTAGGGCCPCPCPPQPPPPQPPPPAAAPQAGEDPTETSDALLVLEGLESEAESLETNSCSEEELSSPGRGGGGVGGRLLLQPPGPELPPVPFPLQDLVPPGRLSRGEQQQQQPPPPPPPPGPLRPLAGPSRKGSFKIRLSRLFRTKSCNGGSGGGDGTGKRPSGDLAASAASLTDMGGSAVRELDTGRKPRLTRTQSAFSPVSFSPLFTGETVSLVDVDISQRGLTSPHPPTPPPPPRRSLSLLDDISGTLPTSVLVAPMGSSLQSFPLPPPPPPHAPDAFPRIAPIRASESLHSQPPQHLQCPLYRPDSSSFAASLRELEKCGWYWGPMNWEDAEMKLKGKPDGSFLVRDSSDPRYILSLSFRSQGITHHTRMEHYRGTFSLWCHPKFEDRCQSVVEFIKRAIMHSKNGKFLYFLRSRVPGLPPTPVQLLYPVSRFSNVKSLQHLCRFRIRQLVRIDHIPDLPLPKPLISYIRKFYYYDPQEEVYLSLKEAQLISKQKQEVEPST.

Disordered regions lie at residues 1-25 (MVFRNVGRPPEEEDAEAAREPGPSE), 89-270 (PPPP…RTQS), and 295-315 (QRGLTSPHPPTPPPPPRRSLS). 3 stretches are compositionally biased toward pro residues: residues 89 to 99 (PPPPQPPPPAA), 155 to 165 (PPGPELPPVPF), and 185 to 196 (QPPPPPPPPGPL). The segment at 124–492 (AESLETNSCS…GKFLYFLRSR (369 aa)) is mediates interaction with SORBS3. Residues 206–217 (GSFKIRLSRLFR) show a composition bias toward basic residues. A compositionally biased stretch (pro residues) spans 301-311 (PHPPTPPPPPR). The SH2 domain maps to 398–507 (WYWGPMNWED…PTPVQLLYPV (110 aa)). Residues 502 to 552 (QLLYPVSRFSNVKSLQHLCRFRIRQLVRIDHIPDLPLPKPLISYIRKFYYY) form the SOCS box domain.

In terms of assembly, substrate-recognition component of the ECS(SOCS7) complex, composed of SOCS7, CUL5, ELOB, ELOC and RNF7/RBX2. Interacts, via the third proline-rich region, with the second SH3 domain of the adapter protein NCK1. Also interacts with GRB2, INSR, PLCG1, SORBS3/vinexin, and phosphorylated STAT3 and STAT5. Interacts with SEPT6. Interacts with phosphorylated IRS4 and PIK3R1. In terms of tissue distribution, widely expressed with higher expression in brain and testis where it is expressed by spermatocytes and early spermatids. Also significantly expressed in spleen, skeletal muscle and kidney.

Its subcellular location is the cytoplasm. The protein localises to the nucleus. It is found in the cell membrane. It functions in the pathway protein modification; protein ubiquitination. Substrate-recognition component of a cullin-5-RING E3 ubiquitin-protein ligase complex (ECS complex, also named CRL5 complex), which mediates the ubiquitination and subsequent proteasomal degradation of target proteins, such as DAB1 and IRS1. Specifically recognizes and binds phosphorylated proteins via its SH2 domain, promoting their ubiquitination. The ECS(SOCS7) complex acts as a key regulator of reelin signaling by mediating ubiquitination and degradation of phosphorylated DAB1 in the cortical plate of the developing cerebral cortex, thereby regulating neuron positioning during cortex development. Functions in insulin signaling and glucose homeostasis through IRS1 ubiquitination and subsequent proteasomal degradation. Also inhibits prolactin, growth hormone and leptin signaling by preventing STAT3 and STAT5 activation, sequestering them in the cytoplasm and reducing their binding to DNA. The protein is Suppressor of cytokine signaling 7 of Mus musculus (Mouse).